Reading from the N-terminus, the 162-residue chain is L-amino acid N-acetyltransferase AaaT (162 aa).

One can recognise an N-acetyltransferase domain in the interval 4–162 (IVIRHAETRD…VDAYYMARVK (159 aa)).

Belongs to the acetyltransferase family.

It carries out the reaction L-phenylalanine + acetyl-CoA = N-acetyl-L-phenylalanine + CoA + H(+). The enzyme catalyses L-methionine + acetyl-CoA = N-acetyl-L-methionine + CoA + H(+). In terms of biological role, catalyzes the N-acetylation of L-phenylalanine and L-methionine using acetyl-CoA as acetyl donor in vitro. Cannot accept L-tyrosine as substrate and propionyl-CoA, succinyl-CoA or (S)-methylmalonyl-CoA as acyl donors. Is also able to acetylate and thus detoxify several nonhydrolyzable aminoacyl adenylates, but not the processed form of the peptide-nucleotide antibiotic microcin C (McC). When overproduced, provides complete resistance to leucyl sulfamoyl adenylate (LSA) and partial resistance to alanyl sulfamoyl adenylate (ASA) and phenylalanyl sulfamoyl adenylate (FSA). Therefore, may protect bacteria from various toxic aminoacyl nucleotides, either exogenous or those generated inside the cell during normal metabolism. This is L-amino acid N-acetyltransferase AaaT from Escherichia coli (strain K12).